The chain runs to 112 residues: ATP synthase subunit c (112 aa).

2 consecutive transmembrane segments (helical) span residues 36-56 (FSVL…AIGM) and 81-101 (MFIA…IALI).

Belongs to the ATPase C chain family. F-type ATPases have 2 components, F(1) - the catalytic core - and F(0) - the membrane proton channel. F(1) has five subunits: alpha(3), beta(3), gamma(1), delta(1), epsilon(1). F(0) has three main subunits: a(1), b(2) and c(10-14). The alpha and beta chains form an alternating ring which encloses part of the gamma chain. F(1) is attached to F(0) by a central stalk formed by the gamma and epsilon chains, while a peripheral stalk is formed by the delta and b chains.

The protein localises to the cell inner membrane. Its function is as follows. F(1)F(0) ATP synthase produces ATP from ADP in the presence of a proton or sodium gradient. F-type ATPases consist of two structural domains, F(1) containing the extramembraneous catalytic core and F(0) containing the membrane proton channel, linked together by a central stalk and a peripheral stalk. During catalysis, ATP synthesis in the catalytic domain of F(1) is coupled via a rotary mechanism of the central stalk subunits to proton translocation. In terms of biological role, key component of the F(0) channel; it plays a direct role in translocation across the membrane. A homomeric c-ring of between 10-14 subunits forms the central stalk rotor element with the F(1) delta and epsilon subunits. In Campylobacter jejuni subsp. doylei (strain ATCC BAA-1458 / RM4099 / 269.97), this protein is ATP synthase subunit c.